Here is a 102-residue protein sequence, read N- to C-terminus: Small ribosomal subunit protein uS10 (102 aa).

The protein belongs to the universal ribosomal protein uS10 family. As to quaternary structure, part of the 30S ribosomal subunit.

Involved in the binding of tRNA to the ribosomes. This chain is Small ribosomal subunit protein uS10, found in Thermoanaerobacter pseudethanolicus (strain ATCC 33223 / 39E) (Clostridium thermohydrosulfuricum).